A 357-amino-acid polypeptide reads, in one-letter code: UDP-N-acetylglucosamine--N-acetylmuramyl-(pentapeptide) pyrophosphoryl-undecaprenol N-acetylglucosamine transferase (357 aa).

UDP-N-acetyl-alpha-D-glucosamine is bound by residues 12–14 (TGG), N124, R162, S190, I244, 263–268 (ALTVAE), and Q289.

Belongs to the glycosyltransferase 28 family. MurG subfamily.

The protein localises to the cell inner membrane. It catalyses the reaction di-trans,octa-cis-undecaprenyl diphospho-N-acetyl-alpha-D-muramoyl-L-alanyl-D-glutamyl-meso-2,6-diaminopimeloyl-D-alanyl-D-alanine + UDP-N-acetyl-alpha-D-glucosamine = di-trans,octa-cis-undecaprenyl diphospho-[N-acetyl-alpha-D-glucosaminyl-(1-&gt;4)]-N-acetyl-alpha-D-muramoyl-L-alanyl-D-glutamyl-meso-2,6-diaminopimeloyl-D-alanyl-D-alanine + UDP + H(+). It functions in the pathway cell wall biogenesis; peptidoglycan biosynthesis. Functionally, cell wall formation. Catalyzes the transfer of a GlcNAc subunit on undecaprenyl-pyrophosphoryl-MurNAc-pentapeptide (lipid intermediate I) to form undecaprenyl-pyrophosphoryl-MurNAc-(pentapeptide)GlcNAc (lipid intermediate II). The chain is UDP-N-acetylglucosamine--N-acetylmuramyl-(pentapeptide) pyrophosphoryl-undecaprenol N-acetylglucosamine transferase from Alkalilimnicola ehrlichii (strain ATCC BAA-1101 / DSM 17681 / MLHE-1).